The chain runs to 191 residues: Cell division protein SepF (191 aa).

Positions 150-164 (TSSSPEEASPSSVST) are enriched in low complexity. Positions 150-191 (TSSSPEEASPSSVSTENTPQYSLGKNTTPEPAWGNSKLSAYS) are disordered. Over residues 165 to 178 (ENTPQYSLGKNTTP) the composition is skewed to polar residues.

Belongs to the SepF family. In terms of assembly, homodimer. Interacts with FtsZ.

It is found in the cytoplasm. In terms of biological role, cell division protein that is part of the divisome complex and is recruited early to the Z-ring. Probably stimulates Z-ring formation, perhaps through the cross-linking of FtsZ protofilaments. Its function overlaps with FtsA. The protein is Cell division protein SepF of Prochlorococcus marinus (strain AS9601).